Consider the following 298-residue polypeptide: GTP cyclohydrolase FolE2 (298 aa).

Belongs to the GTP cyclohydrolase IV family.

The catalysed reaction is GTP + H2O = 7,8-dihydroneopterin 3'-triphosphate + formate + H(+). The protein operates within cofactor biosynthesis; 7,8-dihydroneopterin triphosphate biosynthesis; 7,8-dihydroneopterin triphosphate from GTP: step 1/1. Converts GTP to 7,8-dihydroneopterin triphosphate. This chain is GTP cyclohydrolase FolE2, found in Pseudomonas paraeruginosa (strain DSM 24068 / PA7) (Pseudomonas aeruginosa (strain PA7)).